Reading from the N-terminus, the 192-residue chain is Putative manganese efflux pump MntP (192 aa).

A run of 6 helical transmembrane segments spans residues 3-23, 38-58, 61-81, 101-121, 130-150, and 167-187; these read LIFT…AVSF, FILA…GWLL, GFAD…LFII, VFNF…ALAV, IVPL…SVGG, and ILGG…HLVW.

The protein belongs to the MntP (TC 9.B.29) family.

Its subcellular location is the cell membrane. In terms of biological role, probably functions as a manganese efflux pump. This Methanospirillum hungatei JF-1 (strain ATCC 27890 / DSM 864 / NBRC 100397 / JF-1) protein is Putative manganese efflux pump MntP.